The following is a 424-amino-acid chain: Gamma-glutamyl phosphate reductase (424 aa).

It belongs to the gamma-glutamyl phosphate reductase family.

Its subcellular location is the cytoplasm. It catalyses the reaction L-glutamate 5-semialdehyde + phosphate + NADP(+) = L-glutamyl 5-phosphate + NADPH + H(+). The protein operates within amino-acid biosynthesis; L-proline biosynthesis; L-glutamate 5-semialdehyde from L-glutamate: step 2/2. Functionally, catalyzes the NADPH-dependent reduction of L-glutamate 5-phosphate into L-glutamate 5-semialdehyde and phosphate. The product spontaneously undergoes cyclization to form 1-pyrroline-5-carboxylate. This is Gamma-glutamyl phosphate reductase from Dehalococcoides mccartyi (strain CBDB1).